The chain runs to 1534 residues: DNA-directed RNA polymerase subunit beta'' (1534 aa).

Residues C220, C296, C303, and C306 each coordinate Zn(2+). Basic and acidic residues-rich tracts occupy residues 644–668 and 678–688; these read RTQE…RTRE and PENKYRTREGE. Disordered regions lie at residues 644–698 and 719–800; these read RTQE…EDEY and YRTL…KKEG. Composition is skewed to acidic residues over residues 744 to 762 and 770 to 789; these read GEYE…SSED and TLEE…EYGS.

Belongs to the RNA polymerase beta' chain family. RpoC2 subfamily. As to quaternary structure, in plastids the minimal PEP RNA polymerase catalytic core is composed of four subunits: alpha, beta, beta', and beta''. When a (nuclear-encoded) sigma factor is associated with the core the holoenzyme is formed, which can initiate transcription. Zn(2+) serves as cofactor.

It is found in the plastid. The protein resides in the chloroplast. The enzyme catalyses RNA(n) + a ribonucleoside 5'-triphosphate = RNA(n+1) + diphosphate. DNA-dependent RNA polymerase catalyzes the transcription of DNA into RNA using the four ribonucleoside triphosphates as substrates. The protein is DNA-directed RNA polymerase subunit beta'' of Saccharum officinarum (Sugarcane).